The chain runs to 399 residues: Maltose excess protein 1-like, chloroplastic (399 aa).

A chloroplast-targeting transit peptide spans 1 to 67; sequence MSSSVSSVRL…RRRRYALPPV (67 aa). A run of 9 helical transmembrane segments spans residues 93-113, 123-143, 154-174, 180-202, 217-237, 238-258, 268-288, 306-326, and 361-381; these read FAGA…ILNA, ALFA…LSLL, AVIV…QLAM, LPQF…LNYF, ITIG…VPFI, PNSL…VVMA, INFV…WMPV, AFTM…AVFI, and FLAT…RDTI.

It localises to the plastid. Its subcellular location is the chloroplast inner membrane. In terms of biological role, probable maltose transporter. Essential for the conversion of starch to sucrose in leaves at night, probably via the export of maltose from the chloroplast. This chain is Maltose excess protein 1-like, chloroplastic, found in Oryza sativa subsp. japonica (Rice).